We begin with the raw amino-acid sequence, 394 residues long: Phosphopentomutase (394 aa).

Positions 10, 282, 287, 323, 324, and 335 each coordinate Mn(2+).

This sequence belongs to the phosphopentomutase family. The cofactor is Mn(2+).

It is found in the cytoplasm. It catalyses the reaction 2-deoxy-alpha-D-ribose 1-phosphate = 2-deoxy-D-ribose 5-phosphate. The catalysed reaction is alpha-D-ribose 1-phosphate = D-ribose 5-phosphate. Its pathway is carbohydrate degradation; 2-deoxy-D-ribose 1-phosphate degradation; D-glyceraldehyde 3-phosphate and acetaldehyde from 2-deoxy-alpha-D-ribose 1-phosphate: step 1/2. Isomerase that catalyzes the conversion of deoxy-ribose 1-phosphate (dRib-1-P) and ribose 1-phosphate (Rib-1-P) to deoxy-ribose 5-phosphate (dRib-5-P) and ribose 5-phosphate (Rib-5-P), respectively. The sequence is that of Phosphopentomutase from Dictyoglomus turgidum (strain DSM 6724 / Z-1310).